Here is a 798-residue protein sequence, read N- to C-terminus: Phenylalanine--tRNA ligase beta subunit (798 aa).

In terms of domain architecture, tRNA-binding spans 39–148 (SKHLGGFVVG…VTLAVGASLL (110 aa)). One can recognise a B5 domain in the interval 401–476 (DWQKSIVLRP…RINGYDNIPA (76 aa)). Positions 454, 460, 463, and 464 each coordinate Mg(2+). The region spanning 704–797 (SALQPLDRDF…VAKATGGELR (94 aa)) is the FDX-ACB domain.

This sequence belongs to the phenylalanyl-tRNA synthetase beta subunit family. Type 1 subfamily. Tetramer of two alpha and two beta subunits. Requires Mg(2+) as cofactor.

The protein localises to the cytoplasm. It carries out the reaction tRNA(Phe) + L-phenylalanine + ATP = L-phenylalanyl-tRNA(Phe) + AMP + diphosphate + H(+). The sequence is that of Phenylalanine--tRNA ligase beta subunit from Paramagnetospirillum magneticum (strain ATCC 700264 / AMB-1) (Magnetospirillum magneticum).